Consider the following 989-residue polypeptide: ATP-dependent 6-phosphofructokinase subunit alpha (989 aa).

The segment at 1 to 585 (MPEPSISALS…SYESFLSVSK (585 aa)) is N-terminal catalytic PFK domain 1. ATP contacts are provided by residues Gly-220, 283 to 284 (RS), and 313 to 316 (GDGS). Asp-314 lines the Mg(2+) pocket. Beta-D-fructose 6-phosphate is bound by residues 359-361 (SID), Arg-396, 403-405 (MGR), Glu-460, Arg-487, and 493-496 (HVQR). Residue Asp-361 is the Proton acceptor of the active site. The interval 586 to 599 (YDDGSYLVPESSRL) is interdomain linker. The segment at 600 to 989 (NIAIIHVGAP…LSGRLSIRTT (390 aa)) is C-terminal regulatory PFK domain 2. Beta-D-fructose 2,6-bisphosphate-binding positions include Arg-670, 727–731 (TVSNN), Arg-765, 772–774 (QGG), Glu-832, Arg-858, 864–867 (HVQQ), and Arg-963.

Belongs to the phosphofructokinase type A (PFKA) family. ATP-dependent PFK group I subfamily. Eukaryotic two domain clade 'E' sub-subfamily. Heterododecamer of 4 alpha, 4 beta and 4 gamma chains. The gamma chain bridges the N-terminal halves of the alpha and beta subunits. It depends on Mg(2+) as a cofactor.

Its subcellular location is the cytoplasm. The catalysed reaction is beta-D-fructose 6-phosphate + ATP = beta-D-fructose 1,6-bisphosphate + ADP + H(+). Its pathway is carbohydrate degradation; glycolysis; D-glyceraldehyde 3-phosphate and glycerone phosphate from D-glucose: step 3/4. Its activity is regulated as follows. Allosterically activated by ADP, AMP, or fructose 2,6-bisphosphate, and allosterically inhibited by ATP or citrate. In terms of biological role, catalyzes the phosphorylation of D-fructose 6-phosphate to fructose 1,6-bisphosphate by ATP, the first committing step of glycolysis. Involved in the modulation of glucose-induced microautophagy of peroxisomes independent of its ability to metabolize glucose intermediates. In Komagataella phaffii (strain GS115 / ATCC 20864) (Yeast), this protein is ATP-dependent 6-phosphofructokinase subunit alpha (PFK1).